The sequence spans 253 residues: Phycoerythrobilin:ferredoxin oxidoreductase (253 aa).

Belongs to the HY2 family.

The enzyme catalyses (3Z)-phycoerythrobilin + oxidized 2[4Fe-4S]-[ferredoxin] = 15,16-dihydrobiliverdin + reduced 2[4Fe-4S]-[ferredoxin] + 2 H(+). In terms of biological role, catalyzes the two-electron reduction of the C2 and C3(1) diene system of 15,16-dihydrobiliverdin. This chain is Phycoerythrobilin:ferredoxin oxidoreductase, found in Prochlorococcus marinus (strain MIT 9301).